Consider the following 554-residue polypeptide: CTP synthase (554 aa).

The segment at 1–270 (MTKFVFVTGG…DRIICEELRI (270 aa)) is amidoligase domain. CTP is bound at residue serine 13. Residue serine 13 coordinates UTP. ATP-binding positions include 14–19 (SLGKGI) and aspartate 71. Mg(2+)-binding residues include aspartate 71 and glutamate 144. Residues 151–153 (DIE), 191–196 (KTKPTQ), and lysine 227 contribute to the CTP site. UTP is bound by residues 191-196 (KTKPTQ) and lysine 227. Positions 295 to 547 (TIGMVGKYVD…VEAALAHRQR (253 aa)) constitute a Glutamine amidotransferase type-1 domain. Residue glycine 356 coordinates L-glutamine. The active-site Nucleophile; for glutamine hydrolysis is the cysteine 383. Residues 384-387 (LGMQ), glutamate 407, and arginine 473 contribute to the L-glutamine site. Catalysis depends on residues histidine 520 and glutamate 522.

This sequence belongs to the CTP synthase family. As to quaternary structure, homotetramer.

The catalysed reaction is UTP + L-glutamine + ATP + H2O = CTP + L-glutamate + ADP + phosphate + 2 H(+). It catalyses the reaction L-glutamine + H2O = L-glutamate + NH4(+). It carries out the reaction UTP + NH4(+) + ATP = CTP + ADP + phosphate + 2 H(+). Its pathway is pyrimidine metabolism; CTP biosynthesis via de novo pathway; CTP from UDP: step 2/2. Its activity is regulated as follows. Allosterically activated by GTP, when glutamine is the substrate; GTP has no effect on the reaction when ammonia is the substrate. The allosteric effector GTP functions by stabilizing the protein conformation that binds the tetrahedral intermediate(s) formed during glutamine hydrolysis. Inhibited by the product CTP, via allosteric rather than competitive inhibition. Its function is as follows. Catalyzes the ATP-dependent amination of UTP to CTP with either L-glutamine or ammonia as the source of nitrogen. Regulates intracellular CTP levels through interactions with the four ribonucleotide triphosphates. The protein is CTP synthase of Ralstonia nicotianae (strain ATCC BAA-1114 / GMI1000) (Ralstonia solanacearum).